Here is a 113-residue protein sequence, read N- to C-terminus: Photosystem II reaction center Psb28 protein (113 aa).

This sequence belongs to the Psb28 family. As to quaternary structure, part of the photosystem II complex.

It is found in the cellular thylakoid membrane. The protein is Photosystem II reaction center Psb28 protein of Prochlorococcus marinus (strain NATL2A).